The chain runs to 783 residues: Centrosomal protein of 89 kDa (783 aa).

A disordered region spans residues 28–49 (PKAAVPRTPPPRSPNPSPERPR). Positions 34-45 (RTPPPRSPNPSP) are enriched in pro residues. S50 bears the Phosphoserine mark. 2 disordered regions span residues 63–157 (GRTV…DDLY) and 176–226 (DENI…DITG). Residues 94–107 (ATTSQLRPRPNWQS) show a composition bias toward polar residues. Basic and acidic residues-rich tracts occupy residues 139–155 (ELGDVSAREDRGGHSDD) and 196–214 (QQKDGKHPVLNLKDEKPPL). 2 coiled-coil regions span residues 234–333 (EITR…SRYQ) and 369–719 (LLLA…GELE).

The protein localises to the cytoplasm. The protein resides in the cytosol. It localises to the cytoskeleton. Its subcellular location is the microtubule organizing center. It is found in the centrosome. The protein localises to the spindle pole. The protein resides in the centriole. It localises to the mitochondrion intermembrane space. Required for ciliogenesis. Also plays a role in mitochondrial metabolism where it may modulate complex IV activity. In Homo sapiens (Human), this protein is Centrosomal protein of 89 kDa (CEP89).